We begin with the raw amino-acid sequence, 49 residues long: Delta-actitoxin-Axm1a (49 aa).

Intrachain disulfides connect Cys4–Cys46, Cys6–Cys36, and Cys29–Cys47.

It belongs to the sea anemone sodium channel inhibitory toxin family. Type I subfamily.

Its subcellular location is the secreted. It is found in the nematocyst. Binds specifically to voltage-gated sodium channels (Nav) (site 3), thereby delaying their inactivation. This toxin retains the greatest capacity to discriminate between the cardiac (Nav1.5/SCN5A) and neuronal sodium channels (2.5 nM versus 120 nM, when electrophysiologically tested and 14 nM versus 400 nM, when tested by ion flux), whereas its paralog Anthopleurin-B has the highest affinity of all anemone toxins for the mammalian sodium channel. Its ability to differentiate between cardiac and skeletal channels appears to be associated with domain 4 of the channel. This toxin does not slow or inhibit closed-state inactivation of cardiac sodium channels, but selectively modifies inactivation from the open-state. It does not display phospholipid-binding activities, suggesting that the domain IV S3-S4 linker is located at the extracellular surface and not buried in the phospholipid bilayer. The polypeptide is Delta-actitoxin-Axm1a (Anthopleura xanthogrammica (Giant green sea anemone)).